Here is a 103-residue protein sequence, read N- to C-terminus: Large ribosomal subunit protein bL21 (103 aa).

The protein belongs to the bacterial ribosomal protein bL21 family. As to quaternary structure, part of the 50S ribosomal subunit. Contacts protein L20.

Functionally, this protein binds to 23S rRNA in the presence of protein L20. The protein is Large ribosomal subunit protein bL21 of Hahella chejuensis (strain KCTC 2396).